A 205-amino-acid polypeptide reads, in one-letter code: Holliday junction branch migration complex subunit RuvA (205 aa).

Residues 1-64 (MIGKLKGTID…EDQLKLFGFL (64 aa)) are domain I. Residues 65-143 (SALEREWFRL…AFSGEMAPSI (79 aa)) are domain II. A flexible linker region spans residues 144–153 (GLKQELGEGV). Positions 153–205 (VAAAPVADAVSALTNLGYSRDQAANAVAAALKNGGEGGDSAKLIRLGLKELSR) are domain III.

The protein belongs to the RuvA family. As to quaternary structure, homotetramer. Forms an RuvA(8)-RuvB(12)-Holliday junction (HJ) complex. HJ DNA is sandwiched between 2 RuvA tetramers; dsDNA enters through RuvA and exits via RuvB. An RuvB hexamer assembles on each DNA strand where it exits the tetramer. Each RuvB hexamer is contacted by two RuvA subunits (via domain III) on 2 adjacent RuvB subunits; this complex drives branch migration. In the full resolvosome a probable DNA-RuvA(4)-RuvB(12)-RuvC(2) complex forms which resolves the HJ.

It localises to the cytoplasm. Functionally, the RuvA-RuvB-RuvC complex processes Holliday junction (HJ) DNA during genetic recombination and DNA repair, while the RuvA-RuvB complex plays an important role in the rescue of blocked DNA replication forks via replication fork reversal (RFR). RuvA specifically binds to HJ cruciform DNA, conferring on it an open structure. The RuvB hexamer acts as an ATP-dependent pump, pulling dsDNA into and through the RuvAB complex. HJ branch migration allows RuvC to scan DNA until it finds its consensus sequence, where it cleaves and resolves the cruciform DNA. The polypeptide is Holliday junction branch migration complex subunit RuvA (Rhizobium meliloti (strain 1021) (Ensifer meliloti)).